Here is a 443-residue protein sequence, read N- to C-terminus: MNCSDLFYADTNTENTLHQRTQLSEVILSKGIAKKNELIEFLRQELKEAFDCDVRFWLQGSYKSHTLIKPVDKFSSYDIDIGVYLFFDAENEGVDSKDVKETLRDALLSYCSINNEAKLQESKNACEGLKFSTFLTVDTPIYYKTDTKIKLATDKGWSDSDPKAIQDWITNYYKDKSDRALMKRLVRYFKAWVNVKWQNTGFKKIPSLAINVLVAQHMKQHVREDDCFIYTALSICEELESTLIVRNPLNNSNLISMPQDAECFAHQKLDELKQVCLSCIKSDDIKRGAHFSNLFQHYFPQISLDSATGSTGLPTVVNVPEISVCRYDKNGNHVETIITDRLTVNKGDSLTFTIRNHYDFNIYSSAQWTVRNIGSQANDANDIGHSVTGKPSESHKRGTSYTGSHTMECMILHNGAIIGFKTIHVIVKPARTVRRKTLKFWRA.

Ser-61 contacts ATP. Residues Asp-78 and Asp-80 contribute to the active site. A Mg(2+)-binding site is contributed by Asp-80. Asn-124 is a binding site for ATP. Asp-138 is a catalytic residue. Asp-138 contributes to the Mg(2+) binding site. Leu-208 serves as a coordination point for ATP.

The protein belongs to the CD-NTase family. B06 subfamily. Mg(2+) serves as cofactor.

It carries out the reaction GTP + ATP = 3',3'-cGAMP + 2 diphosphate. The enzyme catalyses UTP + ATP = 3',3'-cUAMP + 2 diphosphate. The catalysed reaction is 2 ATP = 3',3'-c-di-AMP + 2 diphosphate. It catalyses the reaction 2 GTP = 3',3'-c-di-GMP + 2 diphosphate. It carries out the reaction UTP + GTP = 3',3'-cGMP-UMP + 2 diphosphate. Functionally, cyclic nucleotide synthase (second messenger synthase) of a CBASS antivirus system. CBASS (cyclic oligonucleotide-based antiphage signaling system) provides immunity against bacteriophages. The CD-NTase protein (CdnB, this protein) synthesizes cyclic nucleotides in response to infection; these serve as specific second messenger signals. The signals activate a diverse range of effectors, leading to bacterial cell death and thus abortive phage infection. The effector protein for this system is membrane protein Cap15. In terms of biological role, catalyzes the synthesis of 3',3'-cyclic GMP-AMP (3'3'-cGAMP) from GTP and ATP, a second messenger in cell signal transduction. Also makes cyclic UMP-AMP, cyclic UMP-GMP, cyclic di-AMP and cyclic-di-GMP. Its function is as follows. Protects E.coli against phage infection. When the CBASS operon (cdnB-cap15) is introduced in E.coli MG1655 there is about 100-fold protection against phage T2 and about 10-fold protection against phage T5 and T6. The polypeptide is Cyclic GMP-AMP synthase (Escherichia albertii).